We begin with the raw amino-acid sequence, 484 residues long: Trigger factor (484 aa).

The PPIase FKBP-type domain occupies 162–243; that stretch reads GDFISIDLSA…VKSVKERELP (82 aa). A disordered region spans residues 427–484; that stretch reads DGNTIDTSEFFGKPPENDVTDLLDDDADGDAGVDADGDTENSAEPADADSADAAQGAG. Residues 444-476 show a composition bias toward acidic residues; the sequence is DVTDLLDDDADGDAGVDADGDTENSAEPADADS.

It belongs to the FKBP-type PPIase family. Tig subfamily.

Its subcellular location is the cytoplasm. It catalyses the reaction [protein]-peptidylproline (omega=180) = [protein]-peptidylproline (omega=0). Its function is as follows. Involved in protein export. Acts as a chaperone by maintaining the newly synthesized protein in an open conformation. Functions as a peptidyl-prolyl cis-trans isomerase. The protein is Trigger factor of Mycobacterium marinum (strain ATCC BAA-535 / M).